Here is a 500-residue protein sequence, read N- to C-terminus: MGAAAAAGFFFVLLFLSVQGGAVGYTRSDFPRDFVFGAATSAYQYDGAAAEDGRSPTIWDTFAHEGKTKDKGTGDVAADGYHKYKGDVKLMAETGLEAYKFSISWSRLIPNGRGAVNQEGLKYYNNVIDELAKRGIQPHIMLCHLDLPQALEDEYDGWLSPRIVDDFTAYADVCFREFGDRVLHWTTLAEPNIAALGGYDTGVLSPGHCSDPFGLTECTVGNSTVEPYITAHNMILTHAAVVRLYREKYQALQKGIVGINMFSLWSYPLTNSIADLQAAQRYKDFSYGWILHPLVFGDYPQVMKKTIDSRLPSFSQVQTELIKGAIDFIGINHYYSAYVNYRPLVEGVRDYVADRSVSARVYKTDPPTEKYEPTEYPNDPKGLQLALEYLRESYGDFPFYIEENGKGSTNDSLDDPDRVDYIKGYIGGVLDAIRNGVDVRGYFVWSFVDVYELLEGYQSRSGLYRVDFDDGARPRRARRSARWYSDFLKGKKDPVLIAPQ.

The signal sequence occupies residues 1–24 (MGAAAAAGFFFVLLFLSVQGGAVG). Glutamine 44 and histidine 144 together coordinate a beta-D-glucoside. The Proton donor role is filled by glutamate 190. Residues cysteine 209 and cysteine 218 are joined by a disulfide bond. An N-linked (GlcNAc...) asparagine glycan is attached at asparagine 222. A beta-D-glucoside contacts are provided by tyrosine 334 and glutamate 403. Glutamate 403 functions as the Nucleophile in the catalytic mechanism. An N-linked (GlcNAc...) asparagine glycan is attached at asparagine 410. Tryptophan 445 lines the a beta-D-glucoside pocket.

It belongs to the glycosyl hydrolase 1 family.

The enzyme catalyses Hydrolysis of terminal, non-reducing beta-D-glucosyl residues with release of beta-D-glucose.. The protein is Beta-glucosidase 2 (BGLU2) of Oryza sativa subsp. japonica (Rice).